A 346-amino-acid chain; its full sequence is N-acetyl-gamma-glutamyl-phosphate reductase (346 aa).

C149 is a catalytic residue.

It belongs to the NAGSA dehydrogenase family. Type 1 subfamily.

It is found in the cytoplasm. The enzyme catalyses N-acetyl-L-glutamate 5-semialdehyde + phosphate + NADP(+) = N-acetyl-L-glutamyl 5-phosphate + NADPH + H(+). Its pathway is amino-acid biosynthesis; L-arginine biosynthesis; N(2)-acetyl-L-ornithine from L-glutamate: step 3/4. In terms of biological role, catalyzes the NADPH-dependent reduction of N-acetyl-5-glutamyl phosphate to yield N-acetyl-L-glutamate 5-semialdehyde. This chain is N-acetyl-gamma-glutamyl-phosphate reductase, found in Geobacter sp. (strain M21).